Reading from the N-terminus, the 121-residue chain is Prefoldin subunit beta (121 aa).

This sequence belongs to the prefoldin subunit beta family. In terms of assembly, heterohexamer of two alpha and four beta subunits.

It is found in the cytoplasm. Molecular chaperone capable of stabilizing a range of proteins. Seems to fulfill an ATP-independent, HSP70-like function in archaeal de novo protein folding. The protein is Prefoldin subunit beta of Caldivirga maquilingensis (strain ATCC 700844 / DSM 13496 / JCM 10307 / IC-167).